The chain runs to 192 residues: Cytochrome b-245 light chain (192 aa).

At 2-7 (GQIEWA) the chain is on the cytoplasmic side. A helical membrane pass occupies residues 8–30 (MWANEQALASGLILMTGGIVATA). The Extracellular portion of the chain corresponds to 31–35 (GQFTQ). A helical transmembrane segment spans residues 36-53 (WYLGTYSIAAGVLVCLLE). Over 54–69 (YPRGRRTKGSTMERCE) the chain is Cytoplasmic. Residues 70–80 (QKYMTKVVKAF) lie within the membrane without spanning it. Residues 81–86 (GPLSRN) are Cytoplasmic-facing. A helical transmembrane segment spans residues 87–104 (YYIRAFLHLGLSVPAGFL). Leucine 105 is a topological domain (extracellular). A helical membrane pass occupies residues 106 to 126 (ATILGTACLAIASGIYLLAAI). Residues 127–192 (RGEQWTPIEP…TPCPVTDEVV (66 aa)) lie on the Cytoplasmic side of the membrane. The segment at 134–192 (IEPKPKERPQVGGTIKQPPSNPPPRPPPEARKKPGEEAVAGVPRGAPRKTPCPVTDEVV) is disordered. At threonine 147 the chain carries Phosphothreonine. Residue lysine 149 forms a Glycyl lysine isopeptide (Lys-Gly) (interchain with G-Cter in ubiquitin) linkage.

Belongs to the p22phox family. Component of the phagocyte NADPH oxidase core complex/cytochrome b558 complex, composed of CYBB (heavy chain (beta)) and CYBA (light chain (alpha)). Component of the phagocyte NADPH oxidase complex composed of an obligatory core heterodimer formed by the membrane proteins CYBA and CYBB and the cytosolic regulatory subunits NCF1/p47-phox, NCF2/p67-phox, NCF4/p40-phox and the small GTPase RAC1 or RAC2. Interacts with NCF1 (via SH3 domain). Interacts with SH3PXD2A. Interacts with DUOX1, DUOX2 and TPO. Interacts with NOX4; this interaction mediates superoxide generation. Interacts with calprotectin (S100A8/9). Interacts with GBP7. Interacts with NOXO1. Forms a heterodimer with NOX3 and is essential for activity and cell membrane localization of NOX3. Interacts with NOX1. Phosphorylation at Thr-147 enhances NADPH oxidase activity by promoting NCF1/p47-phox binding. Post-translationally, ubiquitinated at Lys-149 likely by RNF145.

It localises to the cell membrane. Its function is as follows. Subunit of NADPH oxidase complexes that is required for the NADPH oxidase activity that generates, in various cell types, superoxide from molecular oxygen utilizing NADPH as an electron donor. Subunit of the phagocyte NADPH oxidase complex that mediates the transfer of electrons from cytosolic NADPH to O2 to produce the superoxide anion (O2(-)). In the activated complex, electrons are first transferred from NADPH to flavin adenine dinucleotide (FAD) and subsequently transferred via two heme molecules to molecular oxygen, producing superoxide through an outer-sphere reaction. Activation of the NADPH oxidase complex is initiated by the assembly of cytosolic subunits of the NADPH oxidase complex with the core NADPH oxidase complex to form a complex at the plasma membrane or phagosomal membrane. This activation process is initiated by phosphorylation dependent binding of the cytosolic NCF1/p47-phox subunit to the C-terminus of CYBA/p22-phox. Aassociates with NOX3 to form a functional NADPH oxidase constitutively generating superoxide. The chain is Cytochrome b-245 light chain from Sus scrofa (Pig).